A 115-amino-acid chain; its full sequence is NADH-ubiquinone oxidoreductase chain 3 (115 aa).

A run of 3 helical transmembrane segments spans residues 3–23, 55–75, and 84–104; these read FVLALTVNTLLALLLMTITFW, FFLVAITFLLFDLEIALLLPL, and LPLMTTSSLMLIIILALGLTY.

It belongs to the complex I subunit 3 family. As to quaternary structure, core subunit of respiratory chain NADH dehydrogenase (Complex I) which is composed of 45 different subunits. Interacts with TMEM186. Interacts with TMEM242.

Its subcellular location is the mitochondrion inner membrane. It catalyses the reaction a ubiquinone + NADH + 5 H(+)(in) = a ubiquinol + NAD(+) + 4 H(+)(out). Functionally, core subunit of the mitochondrial membrane respiratory chain NADH dehydrogenase (Complex I) which catalyzes electron transfer from NADH through the respiratory chain, using ubiquinone as an electron acceptor. Essential for the catalytic activity of complex I. This Pongo abelii (Sumatran orangutan) protein is NADH-ubiquinone oxidoreductase chain 3.